Here is a 472-residue protein sequence, read N- to C-terminus: Diaminopimelate decarboxylase (472 aa).

A disordered region spans residues 1–23; that stretch reads MNVHTAGPRHAEKTRHTATPQRV. The residue at position 97 (K97) is an N6-(pyridoxal phosphate)lysine. Pyridoxal 5'-phosphate is bound by residues G283 and 325-328; that span reads EPGR. Substrate-binding residues include R328, R369, and Y373. Catalysis depends on C400, which acts as the Proton donor. Substrate-binding residues include E401 and Y430. Y430 is a binding site for pyridoxal 5'-phosphate.

Belongs to the Orn/Lys/Arg decarboxylase class-II family. LysA subfamily. As to quaternary structure, homodimer. It depends on pyridoxal 5'-phosphate as a cofactor.

The enzyme catalyses meso-2,6-diaminopimelate + H(+) = L-lysine + CO2. The protein operates within amino-acid biosynthesis; L-lysine biosynthesis via DAP pathway; L-lysine from DL-2,6-diaminopimelate: step 1/1. Its function is as follows. Specifically catalyzes the decarboxylation of meso-diaminopimelate (meso-DAP) to L-lysine. The chain is Diaminopimelate decarboxylase from Mycobacterium leprae (strain TN).